The primary structure comprises 506 residues: MKQILFMDTTLRDGEQSPGVNLNEQEKLQIARQLERLGIHVMEAGFAAASEGDFQSVKRIANTIQNATVMSLARAKESDIRRAYEAVKGAVSPRLHVFLATSDIHMKYKLCMSKEDVLDSIYRSVTLGKSLFPTVQFSAEDATRTARDFLAEAVEVAIRAGANVINIPDTVGYTNPEEYYSLFKYLQESVPSYEKAIFSCHCHDDLGMAVANSLAAVEGGALQVEGTINGIGERAGNAALEEVAVALHIRKDFYKAEPSMTLKEIKATSTLVSRLTGMVVPKNKAIVGANAFAHESGIHQDGVLKEVTTYEIIEPALVGESQNLFVLGKHSGRHAFTEKMKELGYEFTNDERDAVFEAFKKLADRKKEITEEDLRALMLGEAAFAAQQYNITQLQVHFVSNSTQCATVVLKDEEGNVFEDAATGSGSIEAIYNAIQRILGLECELADYRIQSITQGQDALAHVHVELKEGAHQVSGFGVAQDVLEASARAYVHAAGKLKSFIQLVK.

The region spanning Ile4–Lys266 is the Pyruvate carboxyltransferase domain. Mn(2+) contacts are provided by Asp13, His201, His203, and Asn237. The interval Asn390–Lys506 is regulatory domain.

Belongs to the alpha-IPM synthase/homocitrate synthase family. LeuA type 1 subfamily. In terms of assembly, homodimer. The cofactor is Mn(2+).

It localises to the cytoplasm. The enzyme catalyses 3-methyl-2-oxobutanoate + acetyl-CoA + H2O = (2S)-2-isopropylmalate + CoA + H(+). It functions in the pathway amino-acid biosynthesis; L-leucine biosynthesis; L-leucine from 3-methyl-2-oxobutanoate: step 1/4. In terms of biological role, catalyzes the condensation of the acetyl group of acetyl-CoA with 3-methyl-2-oxobutanoate (2-ketoisovalerate) to form 3-carboxy-3-hydroxy-4-methylpentanoate (2-isopropylmalate). This chain is 2-isopropylmalate synthase, found in Bacillus cereus (strain 03BB102).